A 160-amino-acid polypeptide reads, in one-letter code: SsrA-binding protein (160 aa).

The protein belongs to the SmpB family.

Its subcellular location is the cytoplasm. Required for rescue of stalled ribosomes mediated by trans-translation. Binds to transfer-messenger RNA (tmRNA), required for stable association of tmRNA with ribosomes. tmRNA and SmpB together mimic tRNA shape, replacing the anticodon stem-loop with SmpB. tmRNA is encoded by the ssrA gene; the 2 termini fold to resemble tRNA(Ala) and it encodes a 'tag peptide', a short internal open reading frame. During trans-translation Ala-aminoacylated tmRNA acts like a tRNA, entering the A-site of stalled ribosomes, displacing the stalled mRNA. The ribosome then switches to translate the ORF on the tmRNA; the nascent peptide is terminated with the 'tag peptide' encoded by the tmRNA and targeted for degradation. The ribosome is freed to recommence translation, which seems to be the essential function of trans-translation. The sequence is that of SsrA-binding protein from Nocardia farcinica (strain IFM 10152).